The primary structure comprises 120 residues: NAD(P)H-quinone oxidoreductase subunit 3, chloroplastic (120 aa).

3 helical membrane passes run 9–29 (IFWA…LISG), 64–84 (MFAL…PWAM), and 88–108 (VLGV…IVGS).

This sequence belongs to the complex I subunit 3 family. In terms of assembly, NDH is composed of at least 16 different subunits, 5 of which are encoded in the nucleus.

The protein localises to the plastid. The protein resides in the chloroplast thylakoid membrane. The enzyme catalyses a plastoquinone + NADH + (n+1) H(+)(in) = a plastoquinol + NAD(+) + n H(+)(out). The catalysed reaction is a plastoquinone + NADPH + (n+1) H(+)(in) = a plastoquinol + NADP(+) + n H(+)(out). NDH shuttles electrons from NAD(P)H:plastoquinone, via FMN and iron-sulfur (Fe-S) centers, to quinones in the photosynthetic chain and possibly in a chloroplast respiratory chain. The immediate electron acceptor for the enzyme in this species is believed to be plastoquinone. Couples the redox reaction to proton translocation, and thus conserves the redox energy in a proton gradient. The chain is NAD(P)H-quinone oxidoreductase subunit 3, chloroplastic from Acorus calamus var. americanus (American sweet flag).